The following is a 365-amino-acid chain: Undecaprenyl-phosphate alpha-N-acetylglucosaminyl 1-phosphate transferase (365 aa).

10 helical membrane passes run 3-23 (LLTMSTELIYIFLFSMAFLFV), 45-65 (GLIPLVGGISVFAGVCFAFLI), 99-119 (IRAFVQALVGIAMMAVAGLYL), 132-152 (VLGPFGYVVTLFAVWAAINAF), 157-177 (GIDGLLGGLSCVSFGAMGILL), 187-207 (LWCFAMIATIIPYILLNLGLL), 213-233 (VFMGDAGSTLIGFTAIWILLQ), 242-262 (INPVTALWIIAIPLMDMIAIM), 293-313 (QAFVLITLAAALLAMIGVIGE), and 315-335 (LTFIPEWVMLALFLLAFLLYG).

Belongs to the glycosyltransferase 4 family. WecA subfamily. It depends on Mg(2+) as a cofactor. The cofactor is Mn(2+).

It localises to the cell inner membrane. It carries out the reaction di-trans,octa-cis-undecaprenyl phosphate + UDP-N-acetyl-alpha-D-glucosamine = N-acetyl-alpha-D-glucosaminyl-di-trans,octa-cis-undecaprenyl diphosphate + UMP. It functions in the pathway bacterial outer membrane biogenesis; LPS O-antigen biosynthesis. It participates in bacterial outer membrane biogenesis; enterobacterial common antigen biosynthesis. Functionally, catalyzes the transfer of the GlcNAc-1-phosphate moiety from UDP-GlcNAc onto the carrier lipid undecaprenyl phosphate (C55-P), yielding GlcNAc-pyrophosphoryl-undecaprenyl (GlcNAc-PP-C55). The polypeptide is Undecaprenyl-phosphate alpha-N-acetylglucosaminyl 1-phosphate transferase (Yersinia pestis).